Consider the following 247-residue polypeptide: Carboxy-S-adenosyl-L-methionine synthase (247 aa).

Residues Tyr39, 64–66, 89–90, 117–118, Asn132, and Arg199 each bind S-adenosyl-L-methionine; these read GCS, DN, and DI.

This sequence belongs to the class I-like SAM-binding methyltransferase superfamily. Cx-SAM synthase family. As to quaternary structure, homodimer.

The enzyme catalyses prephenate + S-adenosyl-L-methionine = carboxy-S-adenosyl-L-methionine + 3-phenylpyruvate + H2O. In terms of biological role, catalyzes the conversion of S-adenosyl-L-methionine (SAM) to carboxy-S-adenosyl-L-methionine (Cx-SAM). This chain is Carboxy-S-adenosyl-L-methionine synthase, found in Salmonella paratyphi B (strain ATCC BAA-1250 / SPB7).